A 317-amino-acid chain; its full sequence is Xylose/arabinose import permease protein XacH (317 aa).

6 helical membrane-spanning segments follow: residues 40–60 (GIPF…NFAI), 98–118 (LVLL…LAIL), 132–152 (VYLL…LWMF), 179–199 (IALG…TMVV), 241–261 (AAVV…ALVG), and 290–310 (AAIA…YLYY). Positions 94 to 309 (AQNNLVLLVG…ALGVIGPYLY (216 aa)) constitute an ABC transmembrane type-1 domain.

This sequence belongs to the binding-protein-dependent transport system permease family. In terms of assembly, the complex is composed of two ATP-binding proteins (XacJ and XacK), two transmembrane proteins (XacH and XacI) and a solute-binding protein (XacG).

It is found in the cell membrane. In terms of biological role, part of the ABC transporter complex XacGHIJK involved in the uptake of xylose and arabinose. Responsible for the translocation of the substrate across the membrane. The chain is Xylose/arabinose import permease protein XacH from Haloferax volcanii (strain ATCC 29605 / DSM 3757 / JCM 8879 / NBRC 14742 / NCIMB 2012 / VKM B-1768 / DS2) (Halobacterium volcanii).